We begin with the raw amino-acid sequence, 332 residues long: L-lactate dehydrogenase A chain (332 aa).

Residues 29-57 (GMVGMASAISILLKDLCDELALVDVMEDK) and Arg99 each bind NAD(+). Substrate is bound by residues Arg106, Asn138, and Arg169. Position 138 (Asn138) interacts with NAD(+). The active-site Proton acceptor is the His193. Thr248 lines the substrate pocket.

Belongs to the LDH/MDH superfamily. LDH family. As to quaternary structure, homotetramer.

It is found in the cytoplasm. The enzyme catalyses (S)-lactate + NAD(+) = pyruvate + NADH + H(+). It functions in the pathway fermentation; pyruvate fermentation to lactate; (S)-lactate from pyruvate: step 1/1. Its function is as follows. Interconverts simultaneously and stereospecifically pyruvate and lactate with concomitant interconversion of NADH and NAD(+). This is L-lactate dehydrogenase A chain (ldha) from Gillichthys seta (Shortjaw mudsucker).